The following is a 721-amino-acid chain: uncharacterized protein (721 aa).

Disordered regions lie at residues 196 to 291 (TSMT…VGGP) and 370 to 513 (AGIP…AAEQ). 2 stretches are compositionally biased toward low complexity: residues 202-224 (SPAG…TSGP) and 232-250 (SPFG…SSGP). Pro residues-rich tracts occupy residues 264 to 283 (PMPP…PPSA) and 379 to 389 (APTPSPAPIAP). Residues 419-429 (APAGPLPAYGA) show a composition bias toward low complexity. A compositionally biased stretch (pro residues) spans 435 to 446 (VTTPPATPPTPT). Residues 470-484 (VNKSTAPATTQAQPS) are compositionally biased toward polar residues. The span at 491 to 505 (ASATAAATTGAAAGD) shows a compositional bias: low complexity.

This is an uncharacterized protein from Mycobacterium tuberculosis (strain ATCC 25618 / H37Rv).